The following is a 365-amino-acid chain: Peptide chain release factor 2 (365 aa).

Glutamine 251 is modified (N5-methylglutamine).

This sequence belongs to the prokaryotic/mitochondrial release factor family. Post-translationally, methylated by PrmC. Methylation increases the termination efficiency of RF2.

The protein resides in the cytoplasm. In terms of biological role, peptide chain release factor 2 directs the termination of translation in response to the peptide chain termination codons UGA and UAA. This chain is Peptide chain release factor 2, found in Campylobacter jejuni (strain RM1221).